We begin with the raw amino-acid sequence, 313 residues long: Porphobilinogen deaminase (313 aa).

Cysteine 241 bears the S-(dipyrrolylmethanemethyl)cysteine mark.

This sequence belongs to the HMBS family. In terms of assembly, monomer. Dipyrromethane serves as cofactor.

It carries out the reaction 4 porphobilinogen + H2O = hydroxymethylbilane + 4 NH4(+). It participates in porphyrin-containing compound metabolism; protoporphyrin-IX biosynthesis; coproporphyrinogen-III from 5-aminolevulinate: step 2/4. Functionally, tetrapolymerization of the monopyrrole PBG into the hydroxymethylbilane pre-uroporphyrinogen in several discrete steps. In Bacillus velezensis (strain DSM 23117 / BGSC 10A6 / LMG 26770 / FZB42) (Bacillus amyloliquefaciens subsp. plantarum), this protein is Porphobilinogen deaminase.